We begin with the raw amino-acid sequence, 267 residues long: 4-hydroxy-tetrahydrodipicolinate reductase (267 aa).

Residues 8-13 (GAAGRM) and Glu-34 contribute to the NAD(+) site. Arg-35 contributes to the NADP(+) binding site. NAD(+)-binding positions include 98–100 (GST) and 122–125 (APNM). Residue His-155 is the Proton donor/acceptor of the active site. Residue His-156 participates in (S)-2,3,4,5-tetrahydrodipicolinate binding. Lys-159 serves as the catalytic Proton donor. 165–166 (GT) contacts (S)-2,3,4,5-tetrahydrodipicolinate.

This sequence belongs to the DapB family.

The protein localises to the cytoplasm. The catalysed reaction is (S)-2,3,4,5-tetrahydrodipicolinate + NAD(+) + H2O = (2S,4S)-4-hydroxy-2,3,4,5-tetrahydrodipicolinate + NADH + H(+). The enzyme catalyses (S)-2,3,4,5-tetrahydrodipicolinate + NADP(+) + H2O = (2S,4S)-4-hydroxy-2,3,4,5-tetrahydrodipicolinate + NADPH + H(+). The protein operates within amino-acid biosynthesis; L-lysine biosynthesis via DAP pathway; (S)-tetrahydrodipicolinate from L-aspartate: step 4/4. In terms of biological role, catalyzes the conversion of 4-hydroxy-tetrahydrodipicolinate (HTPA) to tetrahydrodipicolinate. This is 4-hydroxy-tetrahydrodipicolinate reductase from Pelobacter propionicus (strain DSM 2379 / NBRC 103807 / OttBd1).